The sequence spans 202 residues: Ribosomal RNA small subunit methyltransferase G (202 aa).

S-adenosyl-L-methionine contacts are provided by residues G75, F80, 125–126 (VQ), and R139.

This sequence belongs to the methyltransferase superfamily. RNA methyltransferase RsmG family.

The protein localises to the cytoplasm. Its function is as follows. Specifically methylates the N7 position of a guanine in 16S rRNA. This is Ribosomal RNA small subunit methyltransferase G from Mesomycoplasma hyopneumoniae (strain 7448) (Mycoplasma hyopneumoniae).